A 440-amino-acid polypeptide reads, in one-letter code: Protein C-ets-1 (440 aa).

N6-acetyllysine; alternate occurs at positions 8 and 15. Glycyl lysine isopeptide (Lys-Gly) (interchain with G-Cter in SUMO2); alternate cross-links involve residues Lys-8 and Lys-15. Residue Lys-15 forms a Glycyl lysine isopeptide (Lys-Gly) (interchain with G-Cter in SUMO); alternate linkage. Thr-38 is modified (phosphothreonine; by MAPK). One can recognise a PNT domain in the interval 51 to 136; sequence ATFSGFTKEQ…EHLEILQKED (86 aa). Residues 130–243 are activation domain; required for transcription activation; it reads EILQKEDVKP…DNMCLGRASR (114 aa). Lys-138 participates in a covalent cross-link: Glycyl lysine isopeptide (Lys-Gly) (interchain with G-Cter in SUMO2). Residue Tyr-223 is modified to Phosphotyrosine. A Glycyl lysine isopeptide (Lys-Gly) (interchain with G-Cter in SUMO) cross-link involves residue Lys-227. Ser-251 bears the Phosphoserine; by CaMK2 mark. Ser-254 carries the post-translational modification Phosphoserine. Thr-265 is subject to Phosphothreonine. Phosphoserine is present on residues Ser-267 and Ser-270. Phosphoserine; by CaMK2 occurs at positions 282 and 285. Residues 304-312 are helix HI-1; it reads FKDYVRDRA. Residue Lys-305 is modified to N6-acetyllysine. Positions 323 to 330 are helix HI-2; the sequence is AAALAGYT. Positions 335 to 415 form a DNA-binding region, ETS; it reads IQLWQFLLEL…AGKRYVYRFV (81 aa). The interval 418-422 is helix H4; sequence LQSLL. Residues 426–432 are helix H5; that stretch reads PEELHAM.

It belongs to the ETS family. As to quaternary structure, binds DNA as a homodimer; homodimerization is required for transcription activation. Interacts with MAF and MAFB. Interacts with PAX5; the interaction alters DNA-binding properties. Interacts with DAXX. Interacts with UBE2I. Interacts with SP100; the interaction is direct and modulates ETS1 transcriptional activity. Post-translationally, phosphorylation at Ser-251, Ser-282 and Ser-285 by CaMK2/CaMKII in response to calcium signaling decreases affinity for DNA: an increasing number of phosphoserines causes DNA-binding to become progressively weaker. Sumoylated on Lys-15 and Lys-227, preferentially with SUMO2; which inhibits transcriptional activity. In terms of processing, ubiquitinated; which induces proteasomal degradation.

It is found in the nucleus. The protein localises to the cytoplasm. Autoinhibited by a module composed of four alpha helices (HI-1, HI-2, H4, and H5) that flank the DNA-binding ETS domain, reducing the affinity for DNA. Phosphorylation by CaMK2/CaMKII in response to calcium signaling decreases affinity for DNA. In terms of biological role, transcription factor. Directly controls the expression of cytokine and chemokine genes in a wide variety of different cellular contexts. May control the differentiation, survival and proliferation of lymphoid cells. May also regulate angiogenesis through regulation of expression of genes controlling endothelial cell migration and invasion. The sequence is that of Protein C-ets-1 (Ets1) from Mus musculus (Mouse).